The primary structure comprises 304 residues: 4-diphosphocytidyl-2-C-methyl-D-erythritol kinase (304 aa).

Lysine 18 is an active-site residue. 103–113 (PVAAGIGGGSA) lines the ATP pocket. Aspartate 145 is an active-site residue.

Belongs to the GHMP kinase family. IspE subfamily.

The catalysed reaction is 4-CDP-2-C-methyl-D-erythritol + ATP = 4-CDP-2-C-methyl-D-erythritol 2-phosphate + ADP + H(+). The protein operates within isoprenoid biosynthesis; isopentenyl diphosphate biosynthesis via DXP pathway; isopentenyl diphosphate from 1-deoxy-D-xylulose 5-phosphate: step 3/6. In terms of biological role, catalyzes the phosphorylation of the position 2 hydroxy group of 4-diphosphocytidyl-2C-methyl-D-erythritol. This chain is 4-diphosphocytidyl-2-C-methyl-D-erythritol kinase, found in Rhodospirillum rubrum (strain ATCC 11170 / ATH 1.1.1 / DSM 467 / LMG 4362 / NCIMB 8255 / S1).